The sequence spans 546 residues: CTP synthase (546 aa).

The amidoligase domain stretch occupies residues 1 to 266 (MARYIFITGG…DTEVLDVFGL (266 aa)). Ser13 is a CTP binding site. UTP is bound at residue Ser13. 14 to 19 (SLGKGL) contacts ATP. Tyr54 contributes to the L-glutamine binding site. Asp71 contributes to the ATP binding site. 2 residues coordinate Mg(2+): Asp71 and Glu140. Residues 147–149 (DIE), 187–192 (KTKPTQ), and Lys223 contribute to the CTP site. UTP is bound by residues 187–192 (KTKPTQ) and Lys223. In terms of domain architecture, Glutamine amidotransferase type-1 spans 293–545 (NIAIVGKYTG…IGAAKERSRL (253 aa)). An L-glutamine-binding site is contributed by Ala357. Cys384 serves as the catalytic Nucleophile; for glutamine hydrolysis. Residues 385–388 (FGMQ), Glu408, and Arg473 contribute to the L-glutamine site. Catalysis depends on residues His518 and Glu520.

The protein belongs to the CTP synthase family. Homotetramer.

The enzyme catalyses UTP + L-glutamine + ATP + H2O = CTP + L-glutamate + ADP + phosphate + 2 H(+). The catalysed reaction is L-glutamine + H2O = L-glutamate + NH4(+). It carries out the reaction UTP + NH4(+) + ATP = CTP + ADP + phosphate + 2 H(+). It participates in pyrimidine metabolism; CTP biosynthesis via de novo pathway; CTP from UDP: step 2/2. Its activity is regulated as follows. Allosterically activated by GTP, when glutamine is the substrate; GTP has no effect on the reaction when ammonia is the substrate. The allosteric effector GTP functions by stabilizing the protein conformation that binds the tetrahedral intermediate(s) formed during glutamine hydrolysis. Inhibited by the product CTP, via allosteric rather than competitive inhibition. Functionally, catalyzes the ATP-dependent amination of UTP to CTP with either L-glutamine or ammonia as the source of nitrogen. Regulates intracellular CTP levels through interactions with the four ribonucleotide triphosphates. The chain is CTP synthase from Phenylobacterium zucineum (strain HLK1).